The sequence spans 652 residues: uncharacterized protein (652 aa).

Basic and acidic residues predominate over residues 1–13; it reads MSVTESKAKTERK. Positions 1–21 are disordered; that stretch reads MSVTESKAKTERKSSRKPAKT.

It belongs to the ParB family.

This is an uncharacterized protein from Escherichia coli (strain K12).